Consider the following 359-residue polypeptide: Src kinase-associated phosphoprotein 2 (359 aa).

Phosphoserine occurs at positions 5, 6, and 9. Positions 14–64 (PEEIRNLLADVETFVADILKGENLSKKAKEKRESLIKKIKDVKSIYLQEFQ) are homodimerization. The disordered stretch occupies residues 66-88 (KGDAEDGEEYDDPFAGPPDTISL). A Phosphotyrosine modification is found at Tyr-75. Ser-87 and Ser-90 each carry phosphoserine. The region spanning 116–219 (FVLKAGYLEK…WVQQLKFVLQ (104 aa)) is the PH domain. 2 positions are modified to phosphotyrosine: Tyr-151 and Tyr-197. Ser-223 is modified (phosphoserine). Tyr-261 is subject to Phosphotyrosine. A disordered region spans residues 264-293 (LPEEEEDSAPVKVEEQRKMSQDSVHHTSGD). Over residues 275 to 293 (KVEEQRKMSQDSVHHTSGD) the composition is skewed to basic and acidic residues. Ser-283 and Ser-286 each carry phosphoserine. The SH3 domain occupies 297–358 (DYANFYQGLW…PKAYIMEMYD (62 aa)).

This sequence belongs to the SKAP family. In terms of assembly, homodimer. Interacts with PTPNS1. Part of a complex consisting of SKAP2, FYB1 and PTPNS1. Part of a complex consisting of SKAP2, FYB1 and LILRB3. May interact with actin. Interacts with FYB1, which is required for SKAP2 protein stability. Interacts with LAT, GRB2, PTK2B and PRAM1. May interact with FYN, HCK and LYN. Interacts with FASLG. Phosphorylated in resting platelets. Phosphorylated by FYN on Tyr-261 upon T-cell activation. Dephosphorylated on Tyr-75 by PTPN22. Ubiquitously expressed. Present in platelets (at protein level).

Its subcellular location is the cytoplasm. May be involved in B-cell and macrophage adhesion processes. In B-cells, may act by coupling the B-cell receptor (BCR) to integrin activation. May play a role in src signaling pathway. The protein is Src kinase-associated phosphoprotein 2 (SKAP2) of Homo sapiens (Human).